The chain runs to 439 residues: Xylose isomerase (439 aa).

Residues His103 and Asp106 contribute to the active site. Positions 234, 270, 273, 298, 309, 311, and 341 each coordinate Mg(2+).

It belongs to the xylose isomerase family. As to quaternary structure, homotetramer. It depends on Mg(2+) as a cofactor.

The protein resides in the cytoplasm. The catalysed reaction is alpha-D-xylose = alpha-D-xylulofuranose. The polypeptide is Xylose isomerase (Bacteroides fragilis (strain YCH46)).